The sequence spans 220 residues: UPF0758 protein CKO_05095 (220 aa).

The 123-residue stretch at 98–220 (ALLSPEMTRE…YVSFAERGWI (123 aa)) folds into the MPN domain. Zn(2+)-binding residues include His-169, His-171, and Asp-182. The JAMM motif motif lies at 169–182 (HNHPSGCAEPSKAD).

Belongs to the UPF0758 family. YicR subfamily.

The sequence is that of UPF0758 protein CKO_05095 from Citrobacter koseri (strain ATCC BAA-895 / CDC 4225-83 / SGSC4696).